Here is a 513-residue protein sequence, read N- to C-terminus: ATP synthase subunit alpha (513 aa).

Residue 169–176 participates in ATP binding; that stretch reads GDRQTGKT.

It belongs to the ATPase alpha/beta chains family. As to quaternary structure, F-type ATPases have 2 components, CF(1) - the catalytic core - and CF(0) - the membrane proton channel. CF(1) has five subunits: alpha(3), beta(3), gamma(1), delta(1), epsilon(1). CF(0) has three main subunits: a(1), b(2) and c(9-12). The alpha and beta chains form an alternating ring which encloses part of the gamma chain. CF(1) is attached to CF(0) by a central stalk formed by the gamma and epsilon chains, while a peripheral stalk is formed by the delta and b chains.

Its subcellular location is the cell inner membrane. It carries out the reaction ATP + H2O + 4 H(+)(in) = ADP + phosphate + 5 H(+)(out). Its function is as follows. Produces ATP from ADP in the presence of a proton gradient across the membrane. The alpha chain is a regulatory subunit. This Haemophilus influenzae (strain PittGG) protein is ATP synthase subunit alpha.